Here is a 348-residue protein sequence, read N- to C-terminus: Holliday junction branch migration complex subunit RuvB (348 aa).

Residues 1–10 are compositionally biased toward low complexity; sequence MAIVSSSSGR. The disordered stretch occupies residues 1-37; it reads MAIVSSSSGRKPPRRPEALMDPQQAPEEVVSRPEDKL. Positions 13–198 are large ATPase domain (RuvB-L); that stretch reads PRRPEALMDP…FGLIQRLEFY (186 aa). Positions 37, 38, 79, 82, 83, 84, 188, 198, and 235 each coordinate ATP. T83 is a Mg(2+) binding site. Residues 199 to 271 are small ATPAse domain (RuvB-S); that stretch reads GQGDLEAIVE…LVGEALSLHR (73 aa). Residues 274-348 are head domain (RuvB-H); the sequence is HRGLDASDRR…AARSHLAEAA (75 aa). Residues R329 and R334 each contribute to the DNA site.

Belongs to the RuvB family. In terms of assembly, homohexamer. Forms an RuvA(8)-RuvB(12)-Holliday junction (HJ) complex. HJ DNA is sandwiched between 2 RuvA tetramers; dsDNA enters through RuvA and exits via RuvB. An RuvB hexamer assembles on each DNA strand where it exits the tetramer. Each RuvB hexamer is contacted by two RuvA subunits (via domain III) on 2 adjacent RuvB subunits; this complex drives branch migration. In the full resolvosome a probable DNA-RuvA(4)-RuvB(12)-RuvC(2) complex forms which resolves the HJ.

The protein localises to the cytoplasm. The catalysed reaction is ATP + H2O = ADP + phosphate + H(+). The RuvA-RuvB-RuvC complex processes Holliday junction (HJ) DNA during genetic recombination and DNA repair, while the RuvA-RuvB complex plays an important role in the rescue of blocked DNA replication forks via replication fork reversal (RFR). RuvA specifically binds to HJ cruciform DNA, conferring on it an open structure. The RuvB hexamer acts as an ATP-dependent pump, pulling dsDNA into and through the RuvAB complex. RuvB forms 2 homohexamers on either side of HJ DNA bound by 1 or 2 RuvA tetramers; 4 subunits per hexamer contact DNA at a time. Coordinated motions by a converter formed by DNA-disengaged RuvB subunits stimulates ATP hydrolysis and nucleotide exchange. Immobilization of the converter enables RuvB to convert the ATP-contained energy into a lever motion, pulling 2 nucleotides of DNA out of the RuvA tetramer per ATP hydrolyzed, thus driving DNA branch migration. The RuvB motors rotate together with the DNA substrate, which together with the progressing nucleotide cycle form the mechanistic basis for DNA recombination by continuous HJ branch migration. Branch migration allows RuvC to scan DNA until it finds its consensus sequence, where it cleaves and resolves cruciform DNA. The polypeptide is Holliday junction branch migration complex subunit RuvB (Synechococcus sp. (strain CC9605)).